The primary structure comprises 374 residues: Potassium channel subfamily K member 9 (374 aa).

Residues 1-8 (MKRQNVRT) lie on the Cytoplasmic side of the membrane. Residues 9-29 (LSLIVCTFTYLLVGAAVFDAL) traverse the membrane as a helical segment. Over 30-88 (ESDHEMREEEKLKAEEIRIKGKYNISSEDYRQLELVILQSEPHRAGVQWKFAGSFYFAI) the chain is Extracellular. A glycan (N-linked (GlcNAc...) asparagine) is linked at Asn53. Residues 89-101 (TVITTIGYGHAAP) constitute an intramembrane region (pore-forming). K(+) is bound by residues Thr93, Ile94, Gly95, and Tyr96. The tract at residues 93–98 (TIGYGH) is selectivity filter 1. Residues 102–107 (GTDAGK) are Extracellular-facing. Residues 108 to 128 (AFCMFYAVLGIPLTLVMFQSL) traverse the membrane as a helical segment. At 129-158 (GERMNTFVRYLLKRIKKCCGMRNTDVSMEN) the chain is on the cytoplasmic side. A helical transmembrane segment spans residues 159–179 (MVTVGFFSCMGTLCIGAAAFS). At 180-194 (QCEEWSFFHAYYYCF) the chain is on the extracellular side. Residues 195–207 (ITLTTIGFGDYVA) constitute an intramembrane region (pore-forming). Positions 199, 200, 201, and 202 each coordinate K(+). The segment at 199–204 (TIGFGD) is selectivity filter 2. The Extracellular segment spans residues 208–218 (LQTKGALQKKP). Residues 219–239 (LYVAFSFMYILVGLTVIGAFL) traverse the membrane as a helical segment. Over 240–374 (NLVVLRFLTM…QRLMKRRKSV (135 aa)) the chain is Cytoplasmic. An X-gate region spans residues 243 to 248 (VLRFLT).

Belongs to the two pore domain potassium channel (TC 1.A.1.8) family. In terms of assembly, homodimer. Heterodimer with KCNK1. Heterodimer with KCNK3. In terms of tissue distribution, mainly found in the cerebellum. Also found in adrenal gland, kidney and lung.

It is found in the cell membrane. The protein localises to the mitochondrion inner membrane. The protein resides in the cell projection. Its subcellular location is the dendrite. The enzyme catalyses K(+)(in) = K(+)(out). It catalyses the reaction Na(+)(in) = Na(+)(out). Inhibited by extracellular acidification adopting a nonconductive conformation at pH 6.0. Inhibited by phorbol 12-myristate 13-acetate (PMA). K(+) channel that conducts voltage-dependent outward rectifying currents upon membrane depolarization. Voltage sensing is coupled to K(+) electrochemical gradient in an 'ion flux gating' mode where outward but not inward ion flow opens the gate. Changes ion selectivity and becomes permeable to Na(+) ions in response to extracellular acidification. Protonation of the pH sensor His-98 stabilizes C-type inactivation conformation likely converting the channel from outward K(+)-conducting, to inward Na(+)-conducting to nonconductive state. Homo- and heterodimerizes to form functional channels with distinct regulatory and gating properties. Allows K(+) currents with fast-gating kinetics important for the repolarization and hyperpolarization phases of action potentials. In granule neurons, hyperpolarizes the resting membrane potential to limit intrinsic neuronal excitability, but once the action potential threshold is reached, supports high-frequency action potential firing and increased neuronal excitability. Homomeric and/or heteromeric KCNK3:KCNK9 channels operate in cerebellar granule cells, whereas heteromeric KCNK1:KCNK9 enables currents in hippocampal dentate gyrus granule neurons. Dispensable for central chemosensory respiration i.e. breathing controlled by brainstem CO2/pH, it rather conducts pH-sensitive currents and controls the firing rate of serotonergic raphe neurons involved in potentiation of the respiratory chemoreflex. In retinal ganglion cells, mediates outward currents that regulate action potentials in response to acidification of the synaptic cleft. Involved in transmission of image-forming and nonimage-forming visual information in the retina. In adrenal gland, contributes to the maintenance of a hyperpolarized resting membrane potential of aldosterone-producing cells at zona glomerulosa and limits aldosterone release as part of a regulatory mechanism that controls arterial blood pressure and electrolyte homeostasis. This Homo sapiens (Human) protein is Potassium channel subfamily K member 9.